Reading from the N-terminus, the 87-residue chain is FXYD domain-containing ion transport regulator 3 (87 aa).

Residues 1-20 (MQKVTLGLLVFLAGFPVLDA) form the signal peptide. The Extracellular portion of the chain corresponds to 21–38 (NDLEDKNSPFYYDWHSLQ). The helical transmembrane segment at 39 to 59 (VGGLICAGVLCAMGIIIVMSA) threads the bilayer. Topologically, residues 60–87 (KCKCKFGQKSGHHPGETPPLITPGSAQS) are cytoplasmic. Positions 66 to 87 (GQKSGHHPGETPPLITPGSAQS) are disordered.

The protein belongs to the FXYD family. In terms of assembly, regulatory subunit of the sodium/potassium-transporting ATPase which is composed of a catalytic alpha subunit, a non-catalytic beta subunit and an additional regulatory subunit. Interacts with catalytic alpha subunit ATP1A1. Also interacts with non-catalytic beta subunit ATP1B1. Interacts with the ATP1A1-ATP1B1, ATP1A2-ATP1B1 and ATP1A3-ATP1B1 NKA isozymes. In terms of processing, glutathionylated. As to expression, isoform 1: Expressed mainly in differentiated cells (at protein level). Isoform 2: Expressed mainly in undifferentiated cells (at protein level).

It localises to the cell membrane. In terms of biological role, associates with and regulates the activity of the sodium/potassium-transporting ATPase (NKA) which transports Na(+) out of the cell and K(+) into the cell. Reduces glutathionylation of the NKA beta-1 subunit ATP1B1, thus reversing glutathionylation-mediated inhibition of ATP1B1. Induces a hyperpolarization-activated chloride current when expressed in Xenopus oocytes. Its function is as follows. Decreases the apparent K+ and Na+ affinity of the sodium/potassium-transporting ATPase over a large range of membrane potentials. Functionally, decreases the apparent K+ affinity of the sodium/potassium-transporting ATPase only at slightly negative and positive membrane potentials and increases the apparent Na+ affinity over a large range of membrane potentials. This chain is FXYD domain-containing ion transport regulator 3 (FXYD3), found in Homo sapiens (Human).